The chain runs to 317 residues: Pectinesterase 31 (317 aa).

Positions 91 and 121 each coordinate substrate. D144 acts as the Proton donor in catalysis. Catalysis depends on D165, which acts as the Nucleophile. Residues R222 and W224 each coordinate substrate.

This sequence belongs to the pectinesterase family. As to expression, expressed in siliques.

It catalyses the reaction [(1-&gt;4)-alpha-D-galacturonosyl methyl ester](n) + n H2O = [(1-&gt;4)-alpha-D-galacturonosyl](n) + n methanol + n H(+). It participates in glycan metabolism; pectin degradation; 2-dehydro-3-deoxy-D-gluconate from pectin: step 1/5. With respect to regulation, does not require salt for activity. Not inhibited by kiwi pectin methylesterase inhibitor (PMEI). Functionally, acts in the modification of cell walls via demethylesterification of cell wall pectin. Acts in a blockwise manner, resulting in a cell wall rigidification. The sequence is that of Pectinesterase 31 (PME31) from Arabidopsis thaliana (Mouse-ear cress).